Reading from the N-terminus, the 189-residue chain is GMP synthase [glutamine-hydrolyzing] subunit A (189 aa).

Residues 1 to 189 (MIVILNNGGQ…CKKCGFEFEE (189 aa)) form the Glutamine amidotransferase type-1 domain. Cys76 acts as the Nucleophile in catalysis. Catalysis depends on residues His163 and Glu165.

Heterodimer composed of a glutamine amidotransferase subunit (A) and a GMP-binding subunit (B).

The catalysed reaction is XMP + L-glutamine + ATP + H2O = GMP + L-glutamate + AMP + diphosphate + 2 H(+). It participates in purine metabolism; GMP biosynthesis; GMP from XMP (L-Gln route): step 1/1. Its function is as follows. Catalyzes the synthesis of GMP from XMP. The sequence is that of GMP synthase [glutamine-hydrolyzing] subunit A from Methanococcus maripaludis (strain C6 / ATCC BAA-1332).